The primary structure comprises 290 residues: Energy-coupling factor transporter ATP-binding protein EcfA2 (290 aa).

The ABC transporter domain occupies 6-246 (EKVEHVYNAR…ADKLAAIGLS (241 aa)). 40-47 (GHTGSGKS) serves as a coordination point for ATP.

It belongs to the ABC transporter superfamily. Energy-coupling factor EcfA family. As to quaternary structure, forms a stable energy-coupling factor (ECF) transporter complex composed of 2 membrane-embedded substrate-binding proteins (S component), 2 ATP-binding proteins (A component) and 2 transmembrane proteins (T component).

It is found in the cell membrane. Its function is as follows. ATP-binding (A) component of a common energy-coupling factor (ECF) ABC-transporter complex. Unlike classic ABC transporters this ECF transporter provides the energy necessary to transport a number of different substrates. The chain is Energy-coupling factor transporter ATP-binding protein EcfA2 from Geobacillus kaustophilus (strain HTA426).